The primary structure comprises 141 residues: Large ribosomal subunit protein uL11 (141 aa).

It belongs to the universal ribosomal protein uL11 family. In terms of assembly, part of the ribosomal stalk of the 50S ribosomal subunit. Interacts with L10 and the large rRNA to form the base of the stalk. L10 forms an elongated spine to which L12 dimers bind in a sequential fashion forming a multimeric L10(L12)X complex. Post-translationally, one or more lysine residues are methylated.

In terms of biological role, forms part of the ribosomal stalk which helps the ribosome interact with GTP-bound translation factors. This chain is Large ribosomal subunit protein uL11, found in Synechococcus sp. (strain JA-2-3B'a(2-13)) (Cyanobacteria bacterium Yellowstone B-Prime).